Here is a 205-residue protein sequence, read N- to C-terminus: Dephospho-CoA kinase (205 aa).

One can recognise a DPCK domain in the interval 7-204 (LVGLTGGIGS…ARYLAAARAT (198 aa)). 15 to 20 (GSGKSA) is an ATP binding site.

Belongs to the CoaE family.

The protein resides in the cytoplasm. The catalysed reaction is 3'-dephospho-CoA + ATP = ADP + CoA + H(+). It functions in the pathway cofactor biosynthesis; coenzyme A biosynthesis; CoA from (R)-pantothenate: step 5/5. Catalyzes the phosphorylation of the 3'-hydroxyl group of dephosphocoenzyme A to form coenzyme A. This chain is Dephospho-CoA kinase, found in Aromatoleum aromaticum (strain DSM 19018 / LMG 30748 / EbN1) (Azoarcus sp. (strain EbN1)).